Here is a 255-residue protein sequence, read N- to C-terminus: 1-(5-phosphoribosyl)-5-[(5-phosphoribosylamino)methylideneamino] imidazole-4-carboxamide isomerase (255 aa).

The active-site Proton acceptor is the Asp8. Asp129 serves as the catalytic Proton donor.

Belongs to the HisA/HisF family.

The protein localises to the cytoplasm. It catalyses the reaction 1-(5-phospho-beta-D-ribosyl)-5-[(5-phospho-beta-D-ribosylamino)methylideneamino]imidazole-4-carboxamide = 5-[(5-phospho-1-deoxy-D-ribulos-1-ylimino)methylamino]-1-(5-phospho-beta-D-ribosyl)imidazole-4-carboxamide. Its pathway is amino-acid biosynthesis; L-histidine biosynthesis; L-histidine from 5-phospho-alpha-D-ribose 1-diphosphate: step 4/9. In Prochlorococcus marinus (strain MIT 9313), this protein is 1-(5-phosphoribosyl)-5-[(5-phosphoribosylamino)methylideneamino] imidazole-4-carboxamide isomerase.